Here is a 936-residue protein sequence, read N- to C-terminus: Isoleucine--tRNA ligase (936 aa).

Residues Pro-58–Thr-68 carry the 'HIGH' region motif. Residue Glu-561 coordinates L-isoleucyl-5'-AMP. The short motif at Lys-602 to Ser-606 is the 'KMSKS' region element. Lys-605 contacts ATP. Positions 899, 902, 919, and 922 each coordinate Zn(2+).

The protein belongs to the class-I aminoacyl-tRNA synthetase family. IleS type 1 subfamily. Monomer. Zn(2+) serves as cofactor.

Its subcellular location is the cytoplasm. The enzyme catalyses tRNA(Ile) + L-isoleucine + ATP = L-isoleucyl-tRNA(Ile) + AMP + diphosphate. Its function is as follows. Catalyzes the attachment of isoleucine to tRNA(Ile). As IleRS can inadvertently accommodate and process structurally similar amino acids such as valine, to avoid such errors it has two additional distinct tRNA(Ile)-dependent editing activities. One activity is designated as 'pretransfer' editing and involves the hydrolysis of activated Val-AMP. The other activity is designated 'posttransfer' editing and involves deacylation of mischarged Val-tRNA(Ile). The protein is Isoleucine--tRNA ligase of Coxiella burnetii (strain CbuG_Q212) (Coxiella burnetii (strain Q212)).